Here is a 142-residue protein sequence, read N- to C-terminus: MLELSLRMCIDYRALTKVTIKNKYPIPRVDDLFDRLAQATWFTKLDLRSGYWQVRIAKGDEPKTTCVTRYGSFEFRVMPFGLTNALATFCNLMNNVLYEYLDHFVVVYLDDLVVYTIYSNSLHEHIKHLRVVRESKEIFESD.

The protein resides in the mitochondrion. It carries out the reaction RNA(n) + a ribonucleoside 5'-triphosphate = RNA(n+1) + diphosphate. This Oenothera berteroana (Bertero's evening primrose) protein is RNA-directed DNA polymerase homolog.